A 446-amino-acid polypeptide reads, in one-letter code: tRNA (guanine-N(7)-)-methyltransferase non-catalytic subunit TRM82 (446 aa).

The interval 67 to 97 (LTQTSEDTEQENTAPYKKQKSSVSKPIKVPK) is disordered. Low complexity predominate over residues 87 to 97 (SSVSKPIKVPK). WD repeat units lie at residues 107 to 147 (PIYN…TENC), 202 to 243 (GHVS…IVKH), and 247 to 287 (GHRE…LLSK).

The protein belongs to the WD repeat TRM82 family. As to quaternary structure, forms a heterodimer with the catalytic subunit TRM8.

Its subcellular location is the nucleus. It functions in the pathway tRNA modification; N(7)-methylguanine-tRNA biosynthesis. In terms of biological role, required for the formation of N(7)-methylguanine at position 46 (m7G46) in tRNA. In the complex, it is required to stabilize and induce conformational changes of the catalytic subunit. In Debaryomyces hansenii (strain ATCC 36239 / CBS 767 / BCRC 21394 / JCM 1990 / NBRC 0083 / IGC 2968) (Yeast), this protein is tRNA (guanine-N(7)-)-methyltransferase non-catalytic subunit TRM82.